A 145-amino-acid chain; its full sequence is Phospholipase A2, membrane associated (145 aa).

Positions methionine 1–glycine 20 are cleaved as a signal peptide. Cystine bridges form between cysteine 46/cysteine 138, cysteine 48/cysteine 64, cysteine 63/cysteine 118, cysteine 69/cysteine 145, cysteine 70/cysteine 111, cysteine 79/cysteine 104, and cysteine 97/cysteine 109. Ca(2+) is bound by residues histidine 47, glycine 49, and glycine 51. The active site involves histidine 67. Aspartate 68 is a binding site for Ca(2+). Residue aspartate 112 is part of the active site.

This sequence belongs to the phospholipase A2 family. The cofactor is Ca(2+). In terms of tissue distribution, alveolar macrophages, and at much lower levels in peripheral blood monocytes and peritoneal macrophages.

Its subcellular location is the secreted. The protein resides in the cell membrane. The protein localises to the mitochondrion outer membrane. It carries out the reaction a 1,2-diacyl-sn-glycero-3-phosphoethanolamine + H2O = a 1-acyl-sn-glycero-3-phosphoethanolamine + a fatty acid + H(+). The enzyme catalyses 1-hexadecanoyl-2-(9Z-octadecenoyl)-sn-glycero-3-phosphoethanolamine + H2O = 1-hexadecanoyl-sn-glycero-3-phosphoethanolamine + (9Z)-octadecenoate + H(+). The catalysed reaction is 1-hexadecanoyl-2-(9Z,12Z-octadecadienoyl)-sn-glycero-3-phosphoethanolamine + H2O = 1-hexadecanoyl-sn-glycero-3-phosphoethanolamine + (9Z,12Z)-octadecadienoate + H(+). It catalyses the reaction 1-hexadecanoyl-2-(5Z,8Z,11Z,14Z-eicosatetraenoyl)-sn-glycero-3-phosphoethanolamine + H2O = 1-hexadecanoyl-sn-glycero-3-phosphoethanolamine + (5Z,8Z,11Z,14Z)-eicosatetraenoate + H(+). It carries out the reaction N-hexadecanoyl-1,2-di-(9Z-octadecenoyl)-sn-glycero-3-phosphoethanolamine + H2O = N-hexadecanoyl-1-(9Z-octadecenoyl)-sn-glycero-3-phosphoethanolamine + (9Z)-octadecenoate + H(+). The enzyme catalyses 1,2-dihexadecanoyl-sn-glycero-3-phospho-(1'-sn-glycerol) + H2O = 1-hexadecanoyl-sn-glycero-3-phospho-(1'-sn-glycerol) + hexadecanoate + H(+). The catalysed reaction is 1-hexadecanoyl-2-(9Z-octadecenoyl)-sn-glycero-3-phosphoglycerol + H2O = 1-hexadecanoyl-sn-glycero-3-phosphoglycerol + (9Z)-octadecenoate + H(+). It catalyses the reaction 1-hexadecanoyl-2-(9Z-octadecenoyl)-sn-glycero-3-phospho-(1'-sn-glycerol) + H2O = 1-hexadecanoyl-sn-glycero-3-phospho-(1'-sn-glycerol) + (9Z)-octadecenoate + H(+). It carries out the reaction a 1,2-diacyl-sn-glycero-3-phosphocholine + H2O = a 1-acyl-sn-glycero-3-phosphocholine + a fatty acid + H(+). The enzyme catalyses 1,2-dihexadecanoyl-sn-glycero-3-phosphocholine + H2O = 1-hexadecanoyl-sn-glycero-3-phosphocholine + hexadecanoate + H(+). The catalysed reaction is 1-hexadecanoyl-2-(9Z-octadecenoyl)-sn-glycero-3-phosphocholine + H2O = 1-hexadecanoyl-sn-glycero-3-phosphocholine + (9Z)-octadecenoate + H(+). It catalyses the reaction 1-hexadecanoyl-2-(9Z,12Z-octadecadienoyl)-sn-glycero-3-phosphocholine + H2O = (9Z,12Z)-octadecadienoate + 1-hexadecanoyl-sn-glycero-3-phosphocholine + H(+). It carries out the reaction 1-hexadecanoyl-2-(4Z,7Z,10Z,13Z,16Z,19Z-docosahexaenoyl)-sn-glycero-3-phosphocholine + H2O = (4Z,7Z,10Z,13Z,16Z,19Z)-docosahexaenoate + 1-hexadecanoyl-sn-glycero-3-phosphocholine + H(+). In terms of biological role, secretory calcium-dependent phospholipase A2 that primarily targets extracellular phospholipids with implications in host antimicrobial defense, inflammatory response and tissue regeneration. Hydrolyzes the ester bond of the fatty acyl group attached at sn-2 position of phospholipids (phospholipase A2 activity) with preference for phosphatidylethanolamines and phosphatidylglycerols over phosphatidylcholines. Contributes to lipid remodeling of cellular membranes and generation of lipid mediators involved in pathogen clearance. Displays bactericidal activity against Gram-positive bacteria by directly hydrolyzing phospholipids of the bacterial membrane. Upon sterile inflammation, targets membrane phospholipids of extracellular mitochondria released from activated platelets, generating free unsaturated fatty acids such as arachidonate that is used by neighboring leukocytes to synthesize inflammatory eicosanoids such as leukotrienes. Simultaneously, by compromising mitochondrial membrane integrity, promotes the release in circulation of potent damage-associated molecular pattern molecules that activate the innate immune response. Plays a stem cell regulator role in the intestinal crypt. Within intracellular compartment mediates Paneth cell differentiation and its stem cell supporting functions by inhibiting Wnt signaling pathway in intestinal stem cell (ICS). Secreted in the intestinal lumen upon inflammation, acts in an autocrine way and promotes prostaglandin E2 synthesis that stimulates Wnt signaling pathway in ICS cells and tissue regeneration. May play a role in the biosynthesis of N-acyl ethanolamines that regulate energy metabolism and inflammation. Hydrolyzes N-acyl phosphatidylethanolamines to N-acyl lysophosphatidylethanolamines, which are further cleaved by a lysophospholipase D to release N-acyl ethanolamines. Independent of its catalytic activity, acts as a ligand for integrins. Binds to and activates integrins ITGAV:ITGB3, ITGA4:ITGB1 and ITGA5:ITGB1. Binds to a site (site 2) which is distinct from the classical ligand-binding site (site 1) and induces integrin conformational changes and enhanced ligand binding to site 1. Induces cell proliferation in an integrin-dependent manner. This chain is Phospholipase A2, membrane associated (PLA2G2A), found in Cavia porcellus (Guinea pig).